The chain runs to 471 residues: Secretogranin-3 (471 aa).

Positions 1–22 are cleaved as a signal peptide; that stretch reads MGFLWTGTWIVVLMLHSSPIQA. 2 disordered regions span residues 23-72 and 86-105; these read FPKP…ESNY and EKEK…NDNK. The span at 32-45 shows a compositional bias: basic and acidic residues; sequence KPLHNRELSAERPL. Residue Ser40 is modified to Phosphoserine. A glycan (O-linked (Xyl...) (chondroitin sulfate) serine) is linked at Ser40. Residue Asn71 is glycosylated (N-linked (GlcNAc...) asparagine). Basic and acidic residues predominate over residues 86–96; the sequence is EKEKNEKERQS. N-linked (GlcNAc...) asparagine glycosylation is present at Asn353. Residues 357–409 form a disordered region; the sequence is LFAVPSEKSHEETDSTKEEAAKMEKEYGTLKDSTKDDDSNPRGKTDEHKGKTE. Positions 363 to 409 are enriched in basic and acidic residues; it reads EKSHEETDSTKEEAAKMEKEYGTLKDSTKDDDSNPRGKTDEHKGKTE. Phosphoserine is present on Ser365.

As to quaternary structure, interacts with CHGA. Interacts with secretogranin II/SCG2. Interacts (via C-terminus) with CPE.

It localises to the cytoplasmic vesicle. The protein resides in the secretory vesicle. Its subcellular location is the secretory vesicle membrane. The protein localises to the secreted. Its function is as follows. Member of the granin protein family that regulates the biogenesis of secretory granules. Acts as a sorting receptor for intragranular proteins including chromogranin A/CHGA. May also play a role in angiogenesis. Promotes endothelial proliferation, migration and tube formation through MEK/ERK signaling pathway. This is Secretogranin-3 (SCG3) from Bos taurus (Bovine).